A 388-amino-acid polypeptide reads, in one-letter code: MKIHEYQGKEILRQAGVPVPRGIPAFTVQEAVEAAQKLGGPVWVVKAQIHAGGRGKGGGVKLARSIDEVKKLAGEILGMQLVTHQTGPEGQKVRRLLIEDGADIQKEYYVSAVTDRASQRVAMIVSSEGGMSIEDVAHDTPEKIITEIVDPATGLTVAQATKLANAIGVPAGSTAQAVDVLQKVYKVYMDTDASLVEINPMILEGNGNIKAIDAKFNFDDNALFRHPEIVAYRDLDEEDPAEVEASKFDLAYISLDGNIGCLVNGAGLAMATMDTIKLFGASPANFLDVGGGATPEKVTEAFKIMLKNPNVKVILVNIFGGIMKCDTIAAGVIAACKAVNLNVPLVVRMKGTNEELGKKLLAESGLPIISADTMADAAQKAVAAVKAA.

Positions 9 to 244 (KEILRQAGVP…LDEEDPAEVE (236 aa)) constitute an ATP-grasp domain. ATP is bound by residues Lys-46, 53–55 (GRG), Glu-99, Ala-102, and Glu-107. Mg(2+) contacts are provided by Asn-199 and Asp-213. Residues Asn-264 and 321-323 (GIM) contribute to the substrate site.

It belongs to the succinate/malate CoA ligase beta subunit family. Heterotetramer of two alpha and two beta subunits. It depends on Mg(2+) as a cofactor.

The enzyme catalyses succinate + ATP + CoA = succinyl-CoA + ADP + phosphate. It carries out the reaction GTP + succinate + CoA = succinyl-CoA + GDP + phosphate. The protein operates within carbohydrate metabolism; tricarboxylic acid cycle; succinate from succinyl-CoA (ligase route): step 1/1. Functionally, succinyl-CoA synthetase functions in the citric acid cycle (TCA), coupling the hydrolysis of succinyl-CoA to the synthesis of either ATP or GTP and thus represents the only step of substrate-level phosphorylation in the TCA. The beta subunit provides nucleotide specificity of the enzyme and binds the substrate succinate, while the binding sites for coenzyme A and phosphate are found in the alpha subunit. In Albidiferax ferrireducens (strain ATCC BAA-621 / DSM 15236 / T118) (Rhodoferax ferrireducens), this protein is Succinate--CoA ligase [ADP-forming] subunit beta.